Reading from the N-terminus, the 348-residue chain is Neutral peroxidase (348 aa).

An N-terminal signal peptide occupies residues 1 to 20 (MASFVARLTLALSFIALALA). The propeptide occupies 21-67 (GYSLVQNTLSSPTHTRLNLIPTWLDSTFDSADVLSYLGFGKSSGRLS). Cystine bridges form between Cys71-Cys149, Cys102-Cys107, Cys156-Cys344, and Cys235-Cys256. His100 acts as the Proton acceptor in catalysis. Residues Asp101, Val104, Gly106, and Asp108 each coordinate Ca(2+). 5 N-linked (GlcNAc...) asparagine glycosylation sites follow: Asn114, Asn118, Asn173, Asn177, and Asn189. Pro198 contacts substrate. Residue Asn203 is glycosylated (N-linked (GlcNAc...) asparagine). Position 228 (His228) interacts with heme b. Thr229 lines the Ca(2+) pocket. N-linked (GlcNAc...) asparagine glycans are attached at residues Asn247 and Asn261. Asp269, Ser271, and Asp276 together coordinate Ca(2+). A glycan (N-linked (GlcNAc...) asparagine) is linked at Asn300.

This sequence belongs to the peroxidase family. Classical plant (class III) peroxidase subfamily. The cofactor is Ca(2+). Heme b serves as cofactor. As to expression, highly expressed in suspension cultured cells. Weak expression also found in the stems of intact plants. No expression in leaf, tuberous root and non-tuberous root.

Its subcellular location is the secreted. It carries out the reaction 2 a phenolic donor + H2O2 = 2 a phenolic radical donor + 2 H2O. Removal of H(2)O(2), oxidation of toxic reductants, biosynthesis and degradation of lignin, suberization, auxin catabolism, response to environmental stresses such as wounding, pathogen attack and oxidative stress. These functions might be dependent on each isozyme/isoform in each plant tissue. In terms of biological role, may contribute to protection against cold-induced oxidative stress. In Ipomoea batatas (Sweet potato), this protein is Neutral peroxidase.